The primary structure comprises 115 residues: UPF0235 protein CTA_0423 (115 aa).

It belongs to the UPF0235 family.

The chain is UPF0235 protein CTA_0423 from Chlamydia trachomatis serovar A (strain ATCC VR-571B / DSM 19440 / HAR-13).